A 183-amino-acid polypeptide reads, in one-letter code: Translocon-associated protein subunit beta (183 aa).

A signal peptide spans 1–17 (MRLLASVLLALFAVSHA). The Lumenal portion of the chain corresponds to 18 to 149 (EEGARLLASK…DRRFSPHFLD (132 aa)). 2 N-linked (GlcNAc...) asparagine glycosylation sites follow: Asn-88 and Asn-104. The helical transmembrane segment at 150 to 169 (WAAFGVMTLPSIGIPLLLWY) threads the bilayer. Over 170 to 183 (SSKRKYDTPKSKKN) the chain is Cytoplasmic.

It belongs to the TRAP-beta family. As to quaternary structure, heterotetramer of TRAP-alpha, TRAP-beta, TRAP-delta and TRAP-gamma. Interacts with STING1.

The protein resides in the endoplasmic reticulum membrane. Functionally, TRAP proteins are part of a complex whose function is to bind calcium to the ER membrane and thereby regulate the retention of ER resident proteins. In Canis lupus familiaris (Dog), this protein is Translocon-associated protein subunit beta (SSR2).